Consider the following 559-residue polypeptide: Oxygen-dependent choline dehydrogenase (559 aa).

Residue 4–33 participates in FAD binding; it reads DYIIIGAGSAGNVLATRLTEESDVSVLLLE. The segment at 182-201 is disordered; that stretch reads EGFGPMDRTVTPKGRRASTA. His471 functions as the Proton acceptor in the catalytic mechanism.

Belongs to the GMC oxidoreductase family. The cofactor is FAD.

The enzyme catalyses choline + A = betaine aldehyde + AH2. The catalysed reaction is betaine aldehyde + NAD(+) + H2O = glycine betaine + NADH + 2 H(+). It participates in amine and polyamine biosynthesis; betaine biosynthesis via choline pathway; betaine aldehyde from choline (cytochrome c reductase route): step 1/1. Functionally, involved in the biosynthesis of the osmoprotectant glycine betaine. Catalyzes the oxidation of choline to betaine aldehyde and betaine aldehyde to glycine betaine at the same rate. This is Oxygen-dependent choline dehydrogenase from Pectobacterium carotovorum subsp. carotovorum (strain PC1).